The following is a 642-amino-acid chain: Threonine--tRNA ligase (642 aa).

The region spanning 1 to 58 (MQVAGKELEVQQGALCGEVLKEALSKKQFKNVVVAKCGDTLLDLTTTVPADCTDLEPV) is the TGS domain. The catalytic stretch occupies residues 239–530 (DHRKLGTQLD…LLEHTGGALP (292 aa)). Zn(2+) is bound by residues cysteine 331, histidine 382, and histidine 507.

Belongs to the class-II aminoacyl-tRNA synthetase family. As to quaternary structure, homodimer. Zn(2+) serves as cofactor.

The protein resides in the cytoplasm. The catalysed reaction is tRNA(Thr) + L-threonine + ATP = L-threonyl-tRNA(Thr) + AMP + diphosphate + H(+). Catalyzes the attachment of threonine to tRNA(Thr) in a two-step reaction: L-threonine is first activated by ATP to form Thr-AMP and then transferred to the acceptor end of tRNA(Thr). Also edits incorrectly charged L-seryl-tRNA(Thr). The polypeptide is Threonine--tRNA ligase (Maridesulfovibrio salexigens (strain ATCC 14822 / DSM 2638 / NCIMB 8403 / VKM B-1763) (Desulfovibrio salexigens)).